We begin with the raw amino-acid sequence, 128 residues long: Aspartate 1-decarboxylase (128 aa).

The Schiff-base intermediate with substrate; via pyruvic acid role is filled by S25. Position 25 is a pyruvic acid (Ser) (S25). T57 provides a ligand contact to substrate. Y58 serves as the catalytic Proton donor. G73–A75 lines the substrate pocket.

It belongs to the PanD family. As to quaternary structure, heterooctamer of four alpha and four beta subunits. Requires pyruvate as cofactor. In terms of processing, is synthesized initially as an inactive proenzyme, which is activated by self-cleavage at a specific serine bond to produce a beta-subunit with a hydroxyl group at its C-terminus and an alpha-subunit with a pyruvoyl group at its N-terminus.

Its subcellular location is the cytoplasm. The enzyme catalyses L-aspartate + H(+) = beta-alanine + CO2. It participates in cofactor biosynthesis; (R)-pantothenate biosynthesis; beta-alanine from L-aspartate: step 1/1. Catalyzes the pyruvoyl-dependent decarboxylation of aspartate to produce beta-alanine. This is Aspartate 1-decarboxylase from Burkholderia cenocepacia (strain ATCC BAA-245 / DSM 16553 / LMG 16656 / NCTC 13227 / J2315 / CF5610) (Burkholderia cepacia (strain J2315)).